The sequence spans 476 residues: Siroheme synthase (476 aa).

The precorrin-2 dehydrogenase /sirohydrochlorin ferrochelatase stretch occupies residues 1 to 207 (MTANVLFPLF…QRHAEAEAVL (207 aa)). NAD(+) contacts are provided by residues 25–26 (KV) and 46–47 (PS). Residue Ser132 is modified to Phosphoserine. Residues 220 to 476 (GSVTLVGAGA…SAPCPPALIL (257 aa)) are uroporphyrinogen-III C-methyltransferase. Asp252 acts as the Proton acceptor in catalysis. Lys274 functions as the Proton donor in the catalytic mechanism. Residues 305-307 (GGD), Val310, 335-336 (TA), Met387, and Gly416 each bind S-adenosyl-L-methionine.

It in the N-terminal section; belongs to the precorrin-2 dehydrogenase / sirohydrochlorin ferrochelatase family. In the C-terminal section; belongs to the precorrin methyltransferase family.

The enzyme catalyses uroporphyrinogen III + 2 S-adenosyl-L-methionine = precorrin-2 + 2 S-adenosyl-L-homocysteine + H(+). The catalysed reaction is precorrin-2 + NAD(+) = sirohydrochlorin + NADH + 2 H(+). It carries out the reaction siroheme + 2 H(+) = sirohydrochlorin + Fe(2+). It functions in the pathway cofactor biosynthesis; adenosylcobalamin biosynthesis; precorrin-2 from uroporphyrinogen III: step 1/1. The protein operates within cofactor biosynthesis; adenosylcobalamin biosynthesis; sirohydrochlorin from precorrin-2: step 1/1. Its pathway is porphyrin-containing compound metabolism; siroheme biosynthesis; precorrin-2 from uroporphyrinogen III: step 1/1. It participates in porphyrin-containing compound metabolism; siroheme biosynthesis; siroheme from sirohydrochlorin: step 1/1. It functions in the pathway porphyrin-containing compound metabolism; siroheme biosynthesis; sirohydrochlorin from precorrin-2: step 1/1. Multifunctional enzyme that catalyzes the SAM-dependent methylations of uroporphyrinogen III at position C-2 and C-7 to form precorrin-2 via precorrin-1. Then it catalyzes the NAD-dependent ring dehydrogenation of precorrin-2 to yield sirohydrochlorin. Finally, it catalyzes the ferrochelation of sirohydrochlorin to yield siroheme. The protein is Siroheme synthase of Xylella fastidiosa (strain 9a5c).